Consider the following 188-residue polypeptide: Elongation factor P (188 aa).

This sequence belongs to the elongation factor P family.

It localises to the cytoplasm. Its pathway is protein biosynthesis; polypeptide chain elongation. In terms of biological role, involved in peptide bond synthesis. Stimulates efficient translation and peptide-bond synthesis on native or reconstituted 70S ribosomes in vitro. Probably functions indirectly by altering the affinity of the ribosome for aminoacyl-tRNA, thus increasing their reactivity as acceptors for peptidyl transferase. This chain is Elongation factor P, found in Mycoplasmoides gallisepticum (strain R(low / passage 15 / clone 2)) (Mycoplasma gallisepticum).